Here is a 125-residue protein sequence, read N- to C-terminus: UPF0325 protein Ping_0715 (125 aa).

It belongs to the UPF0325 family.

This chain is UPF0325 protein Ping_0715, found in Psychromonas ingrahamii (strain DSM 17664 / CCUG 51855 / 37).